The chain runs to 1226 residues: Polyamine-transporting ATPase 13A3 (1226 aa).

Over 1–28 (MDKEERKIINQGQEDEMEIYGYNLSRWK) the chain is Cytoplasmic. An intramembrane segment occupies 29 to 49 (LAIVSLGVICTGGFLLLLLYW). The Cytoplasmic portion of the chain corresponds to 50 to 205 (MPEWRVKATC…IAVKVPSVFK (156 aa)). Serine 98 carries the phosphoserine modification. A helical transmembrane segment spans residues 206 to 226 (LLIKEVLNPFYIFQLFSVILW). Over 227–232 (STDEYY) the chain is Lumenal. Residues 233-253 (YYALAIVVMSIVSIVSSLYSI) traverse the membrane as a helical segment. Over 254–409 (RKQYVMLHDM…KPTDFKLYRD (156 aa)) the chain is Cytoplasmic. A helical membrane pass occupies residues 410-430 (AYLFLLCLVAVAGIGFIYTII). Residues 431-448 (NSILNEVQVGVIIIESLD) are Lumenal-facing. A helical membrane pass occupies residues 449 to 469 (IITITVPPALPAAMTAGIVYA). At 470-940 (QRRLKKIGIF…ALITSFCVFK (471 aa)) the chain is on the cytoplasmic side. The 4-aspartylphosphate intermediate role is filled by aspartate 498. Mg(2+)-binding residues include aspartate 498 and threonine 500. ATP is bound by residues 498 to 500 (DKT), phenylalanine 628, arginine 684, and aspartate 750. Position 817 is a phosphoserine (serine 817). A Mg(2+)-binding site is contributed by aspartate 883. Position 883 to 887 (883 to 887 (DGAND)) interacts with ATP. A helical membrane pass occupies residues 941–961 (FMALYSIIQYFSVTLLYSILS). Position 962 (asparagine 962) is a topological domain, lumenal. Residues 963 to 983 (LGDFQFLFIDLAIILVVVFTM) form a helical membrane-spanning segment. The Cytoplasmic segment spans residues 984 to 999 (SLNPAWKELVAQRPPS). A helical membrane pass occupies residues 1000-1020 (GLISGALLFSVLSQIIICIGF). Over 1021–1073 (QSLGFFWVKQQPWYEVWHPKSDACNATGSLLWNSSHLDNETELDEHNIQNYEN) the chain is Lumenal. The chain crosses the membrane as a helical span at residues 1074–1094 (TTVFFISSFQYLIVAIAFSKG). Residues 1095–1105 (KPFRQPCYKNY) are Cytoplasmic-facing. A helical transmembrane segment spans residues 1106-1126 (FFVFSVIFLYVFILFIMLYPV). Residues 1127-1143 (ASVDQVLQIVCVPYQWR) lie on the Lumenal side of the membrane. The helical transmembrane segment at 1144–1164 (VTMLIIVLVNAFVSITVEESV) threads the bilayer. At 1165-1226 (DRWRKCCLPW…NGSCQIITIT (62 aa)) the chain is on the cytoplasmic side.

The protein belongs to the cation transport ATPase (P-type) (TC 3.A.3) family. Type V subfamily.

It localises to the recycling endosome membrane. The protein localises to the early endosome membrane. Its subcellular location is the late endosome membrane. It catalyses the reaction putrescine(out) + ATP + H2O = putrescine(in) + ADP + phosphate + H(+). ATP-driven pump involved in endocytosis-dependent polyamine transport. Uses ATP as an energy source to transfer polyamine precursor putrescine from the endosomal compartment to the cytosol. The sequence is that of Polyamine-transporting ATPase 13A3 (ATP13A3) from Macaca fascicularis (Crab-eating macaque).